The primary structure comprises 393 residues: Synaptic vesicle membrane protein VAT-1 homolog (393 aa).

A disordered region spans residues 1–40; that stretch reads MSDEREVAEAATGEDASSPPPKTEAASDPQHPAASEGAAA. N-acetylserine is present on Ser-2. A phosphoserine mark is found at Ser-2, Ser-18, Ser-27, Ser-35, and Ser-44.

Belongs to the zinc-containing alcohol dehydrogenase family. Quinone oxidoreductase subfamily. In terms of tissue distribution, expressed in brain. Also expressed in glioblastoma cells.

It localises to the cytoplasm. Its subcellular location is the mitochondrion outer membrane. In terms of biological role, possesses ATPase activity. Plays a part in calcium-regulated keratinocyte activation in epidermal repair mechanisms. Has no effect on cell proliferation. Negatively regulates mitochondrial fusion in cooperation with mitofusin proteins (MFN1-2). This chain is Synaptic vesicle membrane protein VAT-1 homolog (VAT1), found in Homo sapiens (Human).